We begin with the raw amino-acid sequence, 132 residues long: Holo-[acyl-carrier-protein] synthase (132 aa).

2 residues coordinate Mg(2+): Asp13 and Glu63.

It belongs to the P-Pant transferase superfamily. AcpS family. The cofactor is Mg(2+).

It is found in the cytoplasm. The catalysed reaction is apo-[ACP] + CoA = holo-[ACP] + adenosine 3',5'-bisphosphate + H(+). Transfers the 4'-phosphopantetheine moiety from coenzyme A to a Ser of acyl-carrier-protein. This Gloeobacter violaceus (strain ATCC 29082 / PCC 7421) protein is Holo-[acyl-carrier-protein] synthase.